Here is a 331-residue protein sequence, read N- to C-terminus: D-galactose/methyl-galactoside binding periplasmic protein MglB (331 aa).

Residues 1–24 (MKKTAVLSTVAFAIALGSASASFA) form the signal peptide. Asp38 and Asn115 together coordinate beta-D-galactose. 2 residues coordinate beta-D-glucose: Asp38 and Asn115. Positions 158, 160, 162, 164, and 166 each coordinate Ca(2+). Residues His176, Asp178, and Arg182 each contribute to the beta-D-galactose site. Positions 176, 178, and 182 each coordinate beta-D-glucose. Position 229 (Glu229) interacts with Ca(2+). Positions 235, 259, and 279 each coordinate beta-D-galactose. Residues Asn235, Asp259, and Asn279 each contribute to the beta-D-glucose site.

This sequence belongs to the bacterial solute-binding protein 2 family. The ABC transporter complex is composed of one ATP-binding protein (MglA), two transmembrane proteins (MglC) and a solute-binding protein (MglB).

Its subcellular location is the periplasm. In terms of biological role, part of the ABC transporter complex MglABC involved in galactose/methyl galactoside import. In Haemophilus influenzae (strain ATCC 51907 / DSM 11121 / KW20 / Rd), this protein is D-galactose/methyl-galactoside binding periplasmic protein MglB (mglB).